A 283-amino-acid chain; its full sequence is Alpha-ketoglutarate-dependent taurine dioxygenase (283 aa).

Taurine contacts are provided by H70, Y73, and N95. The Fe cation site is built by H99 and D101. V102 contacts taurine. Residue T126 coordinates 2-oxoglutarate. 3-hydroxytryptophan; by autocatalysis occurs at positions 128, 240, and 248. H255 provides a ligand contact to Fe cation. 2-oxoglutarate-binding residues include H255, R266, and R270. R270 is a taurine binding site.

The protein belongs to the TfdA dioxygenase family. Homodimer. Was later shown to be a homotetramer arranged as a dimer of two dimers. Requires Fe(2+) as cofactor.

The enzyme catalyses taurine + 2-oxoglutarate + O2 = aminoacetaldehyde + sulfite + succinate + CO2 + H(+). It functions in the pathway organosulfur degradation; taurine degradation via aerobic pathway; aminoacetaldehyde and sulfite from taurine: step 1/1. Activated by ascorbate and inhibited by divalent metal ions such as zinc, copper and cobalt. In terms of biological role, catalyzes the alpha-ketoglutarate-dependent hydroxylation of taurine yielding sulfite and aminoacetaldehyde after decomposition of an unstable intermediate. Is required for the utilization of taurine (2-aminoethanesulfonate) as an alternative sulfur source for growth in the absence of sulfate. To a lesser extent, pentanesulfonate, 3-(N-morpholino)propanesulfonate and 1,3-dioxo-2-isoindolineethanesulfonate are also desulfonated by this enzyme in vitro; however, desulfonation by TauD of organosulfonates other than taurine seem to be of little or no importance for sulfur metabolism in vivo. This Escherichia coli (strain K12) protein is Alpha-ketoglutarate-dependent taurine dioxygenase (tauD).